Here is a 410-residue protein sequence, read N- to C-terminus: Lipoyl synthase, mitochondrial (410 aa).

A mitochondrion-targeting transit peptide spans 1–29; it reads MASTTVCSAARIRVASSQVLRSIANTRTY. Positions 29–39 are enriched in polar residues; sequence YATTSPESSIP. The interval 29-49 is disordered; that stretch reads YATTSPESSIPETKPTAKRTP. Residues Cys129, Cys134, Cys140, Cys160, Cys164, Cys167, and Ser375 each coordinate [4Fe-4S] cluster. One can recognise a Radical SAM core domain in the interval 143 to 364; that stretch reads GGSKAAATAT…KEKAMEMGFL (222 aa).

The protein belongs to the radical SAM superfamily. Lipoyl synthase family. [4Fe-4S] cluster is required as a cofactor.

It localises to the mitochondrion. It carries out the reaction [[Fe-S] cluster scaffold protein carrying a second [4Fe-4S](2+) cluster] + N(6)-octanoyl-L-lysyl-[protein] + 2 oxidized [2Fe-2S]-[ferredoxin] + 2 S-adenosyl-L-methionine + 4 H(+) = [[Fe-S] cluster scaffold protein] + N(6)-[(R)-dihydrolipoyl]-L-lysyl-[protein] + 4 Fe(3+) + 2 hydrogen sulfide + 2 5'-deoxyadenosine + 2 L-methionine + 2 reduced [2Fe-2S]-[ferredoxin]. It participates in protein modification; protein lipoylation via endogenous pathway; protein N(6)-(lipoyl)lysine from octanoyl-[acyl-carrier-protein]: step 2/2. Catalyzes the radical-mediated insertion of two sulfur atoms into the C-6 and C-8 positions of the octanoyl moiety bound to the lipoyl domains of lipoate-dependent enzymes, thereby converting the octanoylated domains into lipoylated derivatives. This is Lipoyl synthase, mitochondrial from Arthroderma otae (strain ATCC MYA-4605 / CBS 113480) (Microsporum canis).